The following is a 227-amino-acid chain: Cytochrome c oxidase subunit 2 (227 aa).

The Mitochondrial intermembrane segment spans residues 1 to 14 (MAHAAQVGLQDATS). Residues 15–45 (PIMEELITFHDHALMIIFLICFLVLYALFLT) form a helical membrane-spanning segment. Topologically, residues 46–59 (LTTKLTNTNISDAQ) are mitochondrial matrix. A helical membrane pass occupies residues 60–87 (EMETVWTILPAIILVLIALPSLRILYMT). Topologically, residues 88 to 227 (DEVNDPSLTI…IFEMGPVFTL (140 aa)) are mitochondrial intermembrane. Residues His161, Cys196, Glu198, Cys200, His204, and Met207 each coordinate Cu cation. Glu198 serves as a coordination point for Mg(2+).

It belongs to the cytochrome c oxidase subunit 2 family. In terms of assembly, component of the cytochrome c oxidase (complex IV, CIV), a multisubunit enzyme composed of 14 subunits. The complex is composed of a catalytic core of 3 subunits MT-CO1, MT-CO2 and MT-CO3, encoded in the mitochondrial DNA, and 11 supernumerary subunits COX4I1 (or COX4I2), COX5A, COX5B, COX6A1 (or COX6A2), COX6B1 (or COX6B2), COX6C, COX7A2 (or COX7A1), COX7B, COX7C, COX8A and NDUFA4, which are encoded in the nuclear genome. The complex exists as a monomer or a dimer and forms supercomplexes (SCs) in the inner mitochondrial membrane with NADH-ubiquinone oxidoreductase (complex I, CI) and ubiquinol-cytochrome c oxidoreductase (cytochrome b-c1 complex, complex III, CIII), resulting in different assemblies (supercomplex SCI(1)III(2)IV(1) and megacomplex MCI(2)III(2)IV(2)). Found in a complex with TMEM177, COA6, COX18, COX20, SCO1 and SCO2. Interacts with TMEM177 in a COX20-dependent manner. Interacts with COX20. Interacts with COX16. Cu cation is required as a cofactor.

It localises to the mitochondrion inner membrane. The catalysed reaction is 4 Fe(II)-[cytochrome c] + O2 + 8 H(+)(in) = 4 Fe(III)-[cytochrome c] + 2 H2O + 4 H(+)(out). Its function is as follows. Component of the cytochrome c oxidase, the last enzyme in the mitochondrial electron transport chain which drives oxidative phosphorylation. The respiratory chain contains 3 multisubunit complexes succinate dehydrogenase (complex II, CII), ubiquinol-cytochrome c oxidoreductase (cytochrome b-c1 complex, complex III, CIII) and cytochrome c oxidase (complex IV, CIV), that cooperate to transfer electrons derived from NADH and succinate to molecular oxygen, creating an electrochemical gradient over the inner membrane that drives transmembrane transport and the ATP synthase. Cytochrome c oxidase is the component of the respiratory chain that catalyzes the reduction of oxygen to water. Electrons originating from reduced cytochrome c in the intermembrane space (IMS) are transferred via the dinuclear copper A center (CU(A)) of subunit 2 and heme A of subunit 1 to the active site in subunit 1, a binuclear center (BNC) formed by heme A3 and copper B (CU(B)). The BNC reduces molecular oxygen to 2 water molecules using 4 electrons from cytochrome c in the IMS and 4 protons from the mitochondrial matrix. The chain is Cytochrome c oxidase subunit 2 (MT-CO2) from Homo sapiens (Human).